Here is a 163-residue protein sequence, read N- to C-terminus: uncharacterized protein (163 aa).

Disordered stretches follow at residues 1–78 (MHSL…NPHS) and 115–163 (PKWL…LPCH).

This is an uncharacterized protein from Homo sapiens (Human).